The primary structure comprises 468 residues: UDP-N-acetylmuramate--L-alanine ligase (468 aa).

121-127 provides a ligand contact to ATP; sequence GSHGKTT.

The protein belongs to the MurCDEF family.

It is found in the cytoplasm. The catalysed reaction is UDP-N-acetyl-alpha-D-muramate + L-alanine + ATP = UDP-N-acetyl-alpha-D-muramoyl-L-alanine + ADP + phosphate + H(+). Its pathway is cell wall biogenesis; peptidoglycan biosynthesis. Functionally, cell wall formation. This chain is UDP-N-acetylmuramate--L-alanine ligase, found in Borreliella afzelii (strain PKo) (Borrelia afzelii).